The primary structure comprises 505 residues: MNNRGRYPPGIGAGRGAFNPNPNYQSRSGYQQHPPPQYVQRGNYAQNHQQQFQQAPSQPHQYQQQQQQQQQWLRRGQIPGGNSNGDAVVEVEKTVQSEVIDPNSEDWKARLKLPAPDTRYRTEDVTATKGNEFEDYFLKRELLMGIYEKGFERPSPIQEESIPIALTGRDILARAKNGTGKTAAFCIPVLEKIDQDNNVIQAVIIVPTRELALQTSQVCKELGKHLKIQVMVTTGGTSLKDDIMRLYQPVHLLVGTPGRILDLTKKGVCVLKDCSVLVMDEADKLLSQEFQPSVEHLISFLPESRQILMFSATFPVTVKDFKDRFLTNPYVINLMDELTLKGITQFYAFVEERQKIHCLNTLFSKLQINQSIIFCNSVNRVELLAKKITELGYSCFYIHAKMLQDHRNRVFHDFRNGACRNLVCTDLFTRGIDIQAVNVVINFDFPKNAETYLHRVGRSGRFGHLGLAVNLITYEDRFNLYRIEQELGTEIKQIPPHIDQAIYCQ.

The tract at residues 1 to 85 (MNNRGRYPPG…GQIPGGNSNG (85 aa)) is disordered. Residues 20-31 (PNPNYQSRSGYQ) show a composition bias toward polar residues. The span at 43–71 (NYAQNHQQQFQQAPSQPHQYQQQQQQQQQ) shows a compositional bias: low complexity. The short motif at 131–159 (NEFEDYFLKRELLMGIYEKGFERPSPIQE) is the Q motif element. The 171-residue stretch at 162–332 (IPIALTGRDI…DRFLTNPYVI (171 aa)) folds into the Helicase ATP-binding domain. 175–182 (AKNGTGKT) contacts ATP. A Phosphothreonine modification is found at threonine 237. The DEAD box motif lies at 280 to 283 (DEAD). The region spanning 342–502 (GITQFYAFVE…QIPPHIDQAI (161 aa)) is the Helicase C-terminal domain.

It belongs to the DEAD box helicase family. DDX6/DHH1 subfamily.

It localises to the cytoplasm. The protein resides in the P-body. It catalyses the reaction ATP + H2O = ADP + phosphate + H(+). Functionally, ATP-dependent RNA helicase involved in mRNA turnover, and more specifically in mRNA decapping. The polypeptide is DEAD-box ATP-dependent RNA helicase 8 (RH8) (Arabidopsis thaliana (Mouse-ear cress)).